A 430-amino-acid polypeptide reads, in one-letter code: Maintenance of mitochondrial morphology protein 1 (430 aa).

At 1–82 the chain is on the lumenal side; it reads MTEIDPNINE…ISNTWNFTQG (82 aa). Residues 83 to 103 form a helical membrane-spanning segment; sequence LVVGQLSVIFLIIIFVKFFVF. Residues 104-430 are Cytoplasmic-facing; the sequence is ADSSSSIPSK…AKPKDSDDTL (327 aa). Composition is skewed to basic and acidic residues over residues 126-138 and 335-346; these read RDNK…DRHN and ENGKGSSSEDKK. Disordered stretches follow at residues 126 to 154 and 315 to 346; these read RDNK…TDDE and QADQ…EDKK. The 231-residue stretch at 178 to 408 folds into the SMP-LTD domain; sequence ASESLDWFNV…EPRFQVVKLP (231 aa).

The protein belongs to the MMM1 family. As to quaternary structure, homodimer. Component of the ER-mitochondria encounter structure (ERMES) or MDM complex, composed of MMM1, MDM10, MDM12 and MDM34. An MMM1 homodimer associates with one molecule of MDM12 on each side in a pairwise head-to-tail manner, and the SMP-LTD domains of MMM1 and MDM12 generate a continuous hydrophobic tunnel for phospholipid trafficking.

The protein resides in the endoplasmic reticulum membrane. Its function is as follows. Component of the ERMES/MDM complex, which serves as a molecular tether to connect the endoplasmic reticulum (ER) and mitochondria. Components of this complex are involved in the control of mitochondrial shape and protein biogenesis, and function in nonvesicular lipid trafficking between the ER and mitochondria. The MDM12-MMM1 subcomplex functions in the major beta-barrel assembly pathway that is responsible for biogenesis of all outer membrane beta-barrel proteins, and acts in a late step after the SAM complex. The MDM10-MDM12-MMM1 subcomplex further acts in the TOM40-specific pathway after the action of the MDM12-MMM1 complex. Essential for establishing and maintaining the structure of mitochondria and maintenance of mtDNA nucleoids. The sequence is that of Maintenance of mitochondrial morphology protein 1 from Lodderomyces elongisporus (strain ATCC 11503 / CBS 2605 / JCM 1781 / NBRC 1676 / NRRL YB-4239) (Yeast).